Reading from the N-terminus, the 449-residue chain is Type 3 secretion system ATPase (449 aa).

178 to 183 (GCGKTT) is a binding site for ATP.

This sequence belongs to the ATPase alpha/beta chains family. T3SS ATPase subfamily. In terms of assembly, the core secretion machinery of the T3SS is composed of approximately 20 different proteins, including cytoplasmic components, a base, an export apparatus and a needle. This subunit is part of the cytosolic complex. Forms homododecamers.

It is found in the cytoplasm. The catalysed reaction is ATP + H2O + cellular proteinSide 1 = ADP + phosphate + cellular proteinSide 2.. In terms of biological role, ATPase component of the type III secretion system (T3SS), also called injectisome, which is used to inject bacterial effector proteins into eukaryotic host cells. Acts as a molecular motor to provide the energy that is required for the export of proteins. Required for type III secretion apparatus (T3SA) formation, proper protein secretion, host cell invasion and virulence. May play a critical role in T3SS substrate recognition, disassembly of the effector/chaperone complex and unfolding of the effector in an ATP-dependent manner prior to secretion. This Pseudomonas syringae pv. tomato (strain ATCC BAA-871 / DC3000) protein is Type 3 secretion system ATPase.